Consider the following 642-residue polypeptide: Arginine--tRNA ligase, chloroplastic/mitochondrial (642 aa).

A chloroplast and mitochondrion-targeting transit peptide spans 1-53 (MFIFPKDENRRETLTTKLRFSADHLTFTTVTEKLRATAWRFAFSSRAKSVVAM). Ala54 is modified (N-acetylalanine). Residues 190–201 (PNIAKEMHVGHL) carry the 'HIGH' region motif.

The protein belongs to the class-I aminoacyl-tRNA synthetase family.

It is found in the plastid. It localises to the chloroplast. Its subcellular location is the mitochondrion. The enzyme catalyses tRNA(Arg) + L-arginine + ATP = L-arginyl-tRNA(Arg) + AMP + diphosphate. Its function is as follows. Forms part of a macromolecular complex that catalyzes the attachment of specific amino acids to cognate tRNAs during protein synthesis. This chain is Arginine--tRNA ligase, chloroplastic/mitochondrial, found in Arabidopsis thaliana (Mouse-ear cress).